Consider the following 340-residue polypeptide: Glyceraldehyde-3-phosphate dehydrogenase (340 aa).

NAD(+)-binding positions include 11–12 (TI) and Gly109. 138–140 (SCN) is a D-glyceraldehyde 3-phosphate binding site. Cys139 serves as the catalytic Nucleophile. Position 167 (Arg167) interacts with NAD(+). 193-194 (HA) contacts D-glyceraldehyde 3-phosphate. Gln300 is a binding site for NAD(+).

Belongs to the glyceraldehyde-3-phosphate dehydrogenase family. Homotetramer.

It localises to the cytoplasm. It catalyses the reaction D-glyceraldehyde 3-phosphate + phosphate + NADP(+) = (2R)-3-phospho-glyceroyl phosphate + NADPH + H(+). The enzyme catalyses D-glyceraldehyde 3-phosphate + phosphate + NAD(+) = (2R)-3-phospho-glyceroyl phosphate + NADH + H(+). It participates in carbohydrate degradation; glycolysis; pyruvate from D-glyceraldehyde 3-phosphate: step 1/5. The chain is Glyceraldehyde-3-phosphate dehydrogenase from Saccharolobus islandicus (strain M.14.25 / Kamchatka #1) (Sulfolobus islandicus).